Reading from the N-terminus, the 437-residue chain is MSSLSIPRQSLYYVNKVTEGRSVSNVQVVSPCQKQGQTYVTAFTPLTSNVQVHTSLEQLSTIRNADVLIFNNALSQIITNADLLTDFLKNATNATAIGGTVIIREDLKDCSDKRQVARLTDYFDVFRTTDSDGNNTGLDLYTVDQVEHSNYVEQNFLDFIFVFRKKVFAPTTDATITFRDFLDKTQYTNTGIDAYEWMFGVNFISPGGYDENLKIIKRFGDFKPGQTMLDIGVGIGGGARQVADEFGVHVHGIDLSSNMLAIALERLHEEKDSRVKYSITDALVYQFEDNSFDYVFSRDCIQHIPDTEKLFSRIYKALKPGGKVLITMYGKGYGEQSDKFKTYVAQRAYFLKNLKEIADIANKTGFVNVQTENMTPRFKEILLEERGHLEQNEAEFMSKFTQRERDSLISGWTDKLGYIEKDNHNWNFFLAQKPFPK.

N-methylethanolamine phosphate-binding positions include 186 to 187 (QY) and Y195. S-adenosyl-L-homocysteine-binding positions include 204-205 (IS), G232, D254, 281-282 (DA), and R298. N-methylethanolamine phosphate is bound by residues Y329, Y343, 347-349 (RAY), and K415.

Belongs to the class I-like SAM-binding methyltransferase superfamily.

The catalysed reaction is N-methylethanolamine phosphate + S-adenosyl-L-methionine = N,N-dimethylethanolamine phosphate + S-adenosyl-L-homocysteine + H(+). It catalyses the reaction N,N-dimethylethanolamine phosphate + S-adenosyl-L-methionine = phosphocholine + S-adenosyl-L-homocysteine + H(+). It participates in phospholipid metabolism; phosphatidylcholine biosynthesis; phosphocholine from phosphoethanolamine. With respect to regulation, feedback inhibition by phosphatidylcholine and also by S-adenosylhomocysteine. Catalyzes the last two methylation reactions in the synthesis of phosphocholine, by converting phospho-monomethylethanolamine (N-methylethanolamine phosphate) into phospho-dimethylethanolamine (N,N-dimethylethanolamine phosphate) and the latter into phosphocholine. Phosphocholine is a precursor for phosphatidylcholine, a major component in membranes and a precursor itself in the production of glycoconjugates secreted by parasitic nematodes to avoid host immune responses. This chain is Phosphoethanolamine N-methyltransferase 2, found in Caenorhabditis elegans.